We begin with the raw amino-acid sequence, 199 residues long: Photosystem I reaction center subunit XI (199 aa).

Helical transmembrane passes span 108-128 and 165-185; these read LTAGLLATIGAVHILTALFVL and FWLGGCGGAVFAWLLVGTLHL.

The protein belongs to the PsaL family.

It localises to the cellular thylakoid membrane. The protein is Photosystem I reaction center subunit XI of Prochlorococcus marinus (strain MIT 9301).